We begin with the raw amino-acid sequence, 248 residues long: Probable uridine-cytidine kinase (248 aa).

15–23 provides a ligand contact to ATP; the sequence is GGTSCGKST. D73, Y101, R154, R164, and Q172 together coordinate substrate. D201 serves as a coordination point for ATP. Residues 224-248 are disordered; sequence SDEEEEKENELVKQGSFRRPFSRPH.

Belongs to the uridine kinase family.

The catalysed reaction is uridine + ATP = UMP + ADP + H(+). The enzyme catalyses cytidine + ATP = CMP + ADP + H(+). It participates in pyrimidine metabolism; CTP biosynthesis via salvage pathway; CTP from cytidine: step 1/3. The protein operates within pyrimidine metabolism; UMP biosynthesis via salvage pathway; UMP from uridine: step 1/1. This is Probable uridine-cytidine kinase from Caenorhabditis elegans.